A 360-amino-acid polypeptide reads, in one-letter code: MAPLRDRVSTLPRLQLLVLLLLPLLLVPQPIAGHGGKYSREKNEPEMAAKRESGEEFRMEKLNQLWEKAKRLHLSPVRLAELHSDLKIQERDELNWKKLKVEGLDGDGEKEAKLVHNLNVILARYGLDGRKDTQTVHSNALNEDTQDELGDPRLEKLWHKAKTSGKFSSEELDKLWREFLHYKEKIHEYNVLLDTLSRAEEGYENLLSPSDMTHIKSDTLASKHSELKDRLRSINQGLDRLRKVSHQGYGPATEFEEPRVIDLWDLAQSANFTEKELESFREELKHFEAKIEKHNHYQKQLEISHQKLKHVESIGDPEHISRNKEKYVLLEEKTKELGYKVKKHLQDLSSRVSRARHNEL.

Positions 1–33 are cleaved as a signal peptide; it reads MAPLRDRVSTLPRLQLLVLLLLPLLLVPQPIAG. A phosphoserine mark is found at Ser53 and Ser138. Residues 222–302 adopt a coiled-coil conformation; it reads SKHSELKDRL…KHNHYQKQLE (81 aa). Residues 240 to 356 are LDL receptor binding; the sequence is RLRKVSHQGY…DLSSRVSRAR (117 aa). N-linked (GlcNAc...) asparagine glycosylation is present at Asn271. The Prevents secretion from ER signature appears at 357–360; sequence HNEL.

Belongs to the alpha-2-MRAP family. In terms of assembly, interacts with the LRP1/alpha-2-macroglobulin receptor heavy and light chains; the interaction is transient and coincides with a reduction of ligand binding by the receptor. Interacts with LRP2/glycoprotein 330. Interacts with LRP1B; binding is followed by internalization and degradation. Interacts with LDLR. Interacts with SORL1. Interacts with LRP1; this interaction is followed by rapid internalization. In terms of processing, N-glycosylated.

Its subcellular location is the rough endoplasmic reticulum lumen. The protein resides in the endoplasmic reticulum-Golgi intermediate compartment lumen. The protein localises to the golgi apparatus. It localises to the cis-Golgi network. It is found in the golgi apparatus lumen. Its subcellular location is the endosome lumen. The protein resides in the cell surface. In terms of biological role, molecular chaperone for LDL receptor-related proteins that may regulate their ligand binding activity along the secretory pathway. The polypeptide is Alpha-2-macroglobulin receptor-associated protein (Lrpap1) (Rattus norvegicus (Rat)).